The primary structure comprises 545 residues: Chaperonin GroEL (545 aa).

Residues 29–32, K50, 86–90, G414, 477–479, and D493 contribute to the ATP site; these read TMGP, DGTTT, and DAA.

The protein belongs to the chaperonin (HSP60) family. Forms a cylinder of 14 subunits composed of two heptameric rings stacked back-to-back. Interacts with the co-chaperonin GroES.

It localises to the cytoplasm. The catalysed reaction is ATP + H2O + a folded polypeptide = ADP + phosphate + an unfolded polypeptide.. In terms of biological role, together with its co-chaperonin GroES, plays an essential role in assisting protein folding. The GroEL-GroES system forms a nano-cage that allows encapsulation of the non-native substrate proteins and provides a physical environment optimized to promote and accelerate protein folding. The protein is Chaperonin GroEL of Campylobacter lari (strain RM2100 / D67 / ATCC BAA-1060).